Consider the following 676-residue polypeptide: Kojibiose hydrolase (676 aa).

Residues 1–20 form the signal peptide; the sequence is MNKGIIQLLALSLFCISVKA. Glutamate 469 acts as the Proton donor in catalysis. The active-site Proton acceptor is glutamate 613.

The protein belongs to the glycosyl hydrolase 65 family.

It carries out the reaction kojibiose + H2O = beta-D-glucose + D-glucose. Glycosidase that specifically hydrolyzes kojibiose to beta-glucose and glucose. Besides its activity on kojibiose, is also able to act on alpha-1,2-oligoglucans with a higher degree of polymerization. Shows weak activity on nigerose, but is not capable of breaking down trehalose, maltose, isomaltose, sucrose, isomaltulose, turanose or melezitose. This is Kojibiose hydrolase from Mucilaginibacter mallensis.